Here is a 919-residue protein sequence, read N- to C-terminus: Chitin synthase 1 (919 aa).

2 disordered regions span residues 1–69 and 109–134; these read MSYD…SFQT and NLASQSGFPPSTPCGGPSSYSSALGP. Residues 11-30 are compositionally biased toward low complexity; the sequence is GQGRDYARQQRQQRSYQLSD. 2 N-linked (GlcNAc...) asparagine glycosylation sites follow: N187 and N556. 7 helical membrane-spanning segments follow: residues 594-614, 630-650, 668-688, 713-733, 742-762, 843-863, and 887-919; these read IVLLFSWFALANLWLTFSIII, LVVFHWINQAAKWIYVFFLVL, IASFIVFGILGLYLIFVSLWL, VLIAALAATFGIYLIASILYA, FPQYMMIAPSFINILNVYAFC, LVAFWLLTNGALTVAIENVNG, and IILWATFGLSAFRFIGCLIYWVKRNSTRCFRKT.

The protein belongs to the chitin synthase family. Class III subfamily.

The protein resides in the cell membrane. It is found in the cytoplasmic vesicle membrane. The enzyme catalyses [(1-&gt;4)-N-acetyl-beta-D-glucosaminyl](n) + UDP-N-acetyl-alpha-D-glucosamine = [(1-&gt;4)-N-acetyl-beta-D-glucosaminyl](n+1) + UDP + H(+). Polymerizes chitin, a structural polymer of the cell wall and septum, by transferring the sugar moiety of UDP-GlcNAc to the non-reducing end of the growing chitin polymer. This is Chitin synthase 1 from Mycosarcoma maydis (Corn smut fungus).